The primary structure comprises 382 residues: MSDKYYRSAYMNVDLNAVASNFKVFSTLHPNKTVMAVVKANAYGLGSVKVARHLMENGATFFAVATLDEAIELRMHGITAKILVLGVLPAKDIDKAIQHRVALTVPSKQWLKEAIKNISGEQEKKLWLHIKLDTGMGRLGIKDTKTYQEVIEIIQQYEQLVFEGVFTHFACADEPGDMTTEQYQRFKDMVNEAIKPEYIHCQNSAGSLLMDCQFCNAIRPGISLYGYYPSEYVQQKVKVHLKPSVQLIANVVQTKTLQAGESVSYGATYTATDPTTIALLPIGYADGYLRIMQGSFVNVNGHQCEVIGRVCMDQTIVKVPDQVKAGDSVILIDNHRESPQSVEVVAEKQHTINYEVLCNLSRRLPRIYHDGDQRFVTNELLK.

The active-site Proton acceptor; specific for D-alanine is the lysine 39. Position 39 is an N6-(pyridoxal phosphate)lysine (lysine 39). Arginine 138 contributes to the substrate binding site. Tyrosine 265 acts as the Proton acceptor; specific for L-alanine in catalysis. Methionine 312 is a binding site for substrate.

The protein belongs to the alanine racemase family. It depends on pyridoxal 5'-phosphate as a cofactor.

The catalysed reaction is L-alanine = D-alanine. It participates in amino-acid biosynthesis; D-alanine biosynthesis; D-alanine from L-alanine: step 1/1. Functionally, catalyzes the interconversion of L-alanine and D-alanine. May also act on other amino acids. The chain is Alanine racemase 1 (alr1) from Staphylococcus aureus (strain NCTC 8325 / PS 47).